The following is a 381-amino-acid chain: tRNA-specific 2-thiouridylase MnmA (381 aa).

ATP contacts are provided by residues 9 to 16 and methionine 35; that span reads GMSGGVDS. An interaction with target base in tRNA region spans residues 95–97; it reads NPD. Cysteine 100 acts as the Nucleophile in catalysis. Residues cysteine 100 and cysteine 196 are joined by a disulfide bond. Glycine 124 is an ATP binding site. The interaction with tRNA stretch occupies residues 146-148; the sequence is KDQ. Cysteine 196 (cysteine persulfide intermediate) is an active-site residue. The segment at 308-309 is interaction with tRNA; that stretch reads RY.

Belongs to the MnmA/TRMU family.

It localises to the cytoplasm. It carries out the reaction S-sulfanyl-L-cysteinyl-[protein] + uridine(34) in tRNA + AH2 + ATP = 2-thiouridine(34) in tRNA + L-cysteinyl-[protein] + A + AMP + diphosphate + H(+). Functionally, catalyzes the 2-thiolation of uridine at the wobble position (U34) of tRNA, leading to the formation of s(2)U34. This Paraburkholderia xenovorans (strain LB400) protein is tRNA-specific 2-thiouridylase MnmA.